The following is a 247-amino-acid chain: UPF0309 protein Lm4b_02611 (247 aa).

Positions 31–214 (VAESIENDGV…ETMVNDNFTP (184 aa)) constitute an SIS domain.

Belongs to the UPF0309 family.

This is UPF0309 protein Lm4b_02611 from Listeria monocytogenes serotype 4b (strain CLIP80459).